A 443-amino-acid chain; its full sequence is Threonine/serine transporter TdcC (443 aa).

The next 11 helical transmembrane spans lie at 22–42 (TTWTLGLFGTAIGAGVLFFPI), 44–64 (AGFGGLIPILVMLVLAYPIAF), 97–117 (GVVITFLYFFAICPLLWIYGV), 140–160 (VVALLLLLLMAFVIWFGKDLM), 163–183 (VMSYLVWPFIASLVVISLSLI), 207–227 (ILVTVWLGISIMVFSFNFSPI), 259–279 (ASMLMVAVVMFFAFSCLFTLS), 319–339 (ASIIALVAIFKSFFGHYLGTL), 366–386 (LSMVFIMGSTWVVAYANPNIL), 389–409 (IEAMGAPIIASLLCLLPMYAI), and 423–443 (DNLFVTAIGLLTILNIVYKLF).

The protein belongs to the amino acid/polyamine transporter 2 family. SdaC/TdcC subfamily.

Its subcellular location is the cell inner membrane. The catalysed reaction is L-threonine(in) + H(+)(in) = L-threonine(out) + H(+)(out). It catalyses the reaction L-serine(in) + H(+)(in) = L-serine(out) + H(+)(out). Involved in the import of threonine and serine into the cell, with the concomitant import of a proton (symport system). In Klebsiella pneumoniae (strain 342), this protein is Threonine/serine transporter TdcC.